The following is a 91-amino-acid chain: Small ribosomal subunit protein bS16 (91 aa).

Belongs to the bacterial ribosomal protein bS16 family.

In Ligilactobacillus salivarius (strain UCC118) (Lactobacillus salivarius), this protein is Small ribosomal subunit protein bS16.